The sequence spans 443 residues: Zinc finger protein ZIC 1 (443 aa).

Residues 221–256 (LICKWIEPEQLANPKKSCNKTFSTMHELVTHVTVEH) form a C2H2-type 1; atypical zinc finger. The C2H2-type 2; atypical zinc finger occupies 265-292 (HICVWEECPREGKPFKAKYKLINHIRVH). C2H2-type zinc fingers lie at residues 298 to 322 (FPCP…KRTH), 328 to 352 (FKCE…MHVH), and 358 to 380 (YLCK…MKVH). The interval 371–433 (SSLRKHMKVH…AVHHTSNHST (63 aa)) is disordered. A compositionally biased stretch (low complexity) spans 383–396 (SSQGSQPSPAASSG). Over residues 397 to 413 (YESSTPPTIVSPSAENQ) the composition is skewed to polar residues. The negatively regulates transcriptional activity stretch occupies residues 408–443 (PSAENQSTSSLSPSSSAVHHTSNHSTLSSNFNEWYV). The segment covering 414-433 (STSSLSPSSSAVHHTSNHST) has biased composition (low complexity).

This sequence belongs to the GLI C2H2-type zinc-finger protein family. In terms of tissue distribution, during early gastrula stages, widely expressed in the dorsal ectoderm. At mid-gastrula, expressed throughout the presumptive neural plate and at late gastrula, expression gradually diminishes in the dorsal midline and increases in the anterior folds. By early neurula stage, expression becomes restricted to the lateral edges of the neural plate, corresponding to the presumptive dorsal neural plate and neural crest, and in flanking ectoderm. In early tailbud stages (stages 22-23), expressed in the dorsal forebrain, midbrain and hindbrain. Subsequently expressed in the telencephalon and at the diencephalon/mesencephalon boundary. In the spinal cord, expression is restricted to the dorsal most region including the roof plate. Also expressed in the somites but not in eye vesicles. At larval stages, expressed mainly in the dorsal neural tube throughout its anteroposterior axis.

The protein localises to the nucleus. Its subcellular location is the cytoplasm. Transcriptional activator that induces expression of multiple genes including pax3, en2, snai2/slug, feb and a subset of wnt genes. Has multiple key roles in the regulation of neural induction and neurogenesis: acts as a neural competence factor, sensitizing the presumptive neuroectoderm to respond to subsequent neuralizing signals. Promotes both preplacodal cell fates and neural crest cell fates, two of the cell populations that arise from the neural plate border. Cooperates with pax3 in concert with wnt signaling to determine neural crest fate. Synergizes with the bmp-inhibitor noggin/nog and acts through the wnt pathway to induce expression of en2. May bind to the minimal GLI-consensus sequence 5'-TGGGTGGTC-3'. In Xenopus laevis (African clawed frog), this protein is Zinc finger protein ZIC 1 (zic1).